The chain runs to 344 residues: Heat-inducible transcription repressor HrcA (344 aa).

The protein belongs to the HrcA family.

Negative regulator of class I heat shock genes (grpE-dnaK-dnaJ and groELS operons). Prevents heat-shock induction of these operons. The protein is Heat-inducible transcription repressor HrcA of Streptococcus equi subsp. equi (strain 4047).